Consider the following 62-residue polypeptide: 2-hydroxymuconate tautomerase (62 aa).

Residue proline 2 is the Proton acceptor; via imino nitrogen of the active site. A substrate-binding site is contributed by 9–12; it reads LEGR.

The protein belongs to the 4-oxalocrotonate tautomerase family. In terms of assembly, homohexamer.

It carries out the reaction (2Z,4E)-2-hydroxyhexa-2,4-dienedioate = (3E)-2-oxohex-3-enedioate. Catalyzes both 1,3- and 1,5-keto-enol tautomerization of the diacid 2-hydroxymuconate (2-hydroxy-2,4-hexadienedioate) to produce 2-oxo-4-hexenedioate. This reaction is highly stereoselective and produces a mixture of stereoisomers, where the (3S)-isomer of 2-oxo-4-hexenedioate predominates. Also catalyzes the tautomerization of 2-hydroxymuconate to 2-oxo-3-hexenedioate, however this reaction is slower and occurs after the tautomerization of 2-hydroxymuconate to 2-oxo-4-hexenedioate. Using 2-hydroxy-2,4-pentadienoate, phenylenolpyruvate, (p-hydroxyphenyl)-enolpyruvate and 2-hydroxy-2,4-heptadiene-1,7-dioate, YwhB is a highly efficient 1,3-keto-enol tautomerase, but clearly not a 1,5-keto-enol tautomerase. Tautomerization of the two monoacids 2-hydroxy-2,4-pentadienoate and phenylenolpyruvate produces a mixture of stereoisomers, where the (3R)-isomers predominate. This chain is 2-hydroxymuconate tautomerase (ywhB), found in Bacillus subtilis (strain 168).